A 291-amino-acid polypeptide reads, in one-letter code: MAGVILLLLSLCVGYIAYYFFRTESMNKESVRGKRVLITGSSTGLGEQIAYEFARMGAHIMITARRLQQLQEVASQCMKLGAASAHYVASDMGNLESAQSVAQEAVVKLGGLDYLVLNHIGGSGGFGFFKGDMDPVVGSTTVNFLSYVQLTSSALSALQESQGSIVVISSMSGRIGAPFTTSYCASKFALEGFYSSLRREFALQNSKMSVTVAVLGYIDTENAVKKVGNKVSMTASSKEDCAREVVKAAVLQQPEIFYPYWGIKPFVLLRDWFPGLVAKILDKCYILENIQ.

Positions 1-17 (MAGVILLLLSLCVGYIA) are cleaved as a signal peptide. NADP(+)-binding positions include 40 to 66 (GSSTGLGEQIAYEFARMGAHIMITARR), 91 to 92 (DM), and 118 to 120 (NHI). Residue Ser170 coordinates substrate. Tyr183 acts as the Proton acceptor in catalysis. Residues 183–187 (YCASK) and 216–222 (GYIDTEN) each bind NADP(+).

The protein belongs to the short-chain dehydrogenases/reductases (SDR) family.

The protein localises to the secreted. It carries out the reaction cortisone + NADPH + H(+) = cortisol + NADP(+). In terms of biological role, unidirectional NADP(+)-dependent cortisol dehydrogenase (in vitro). In Xenopus laevis (African clawed frog), this protein is Hydroxysteroid 11-beta-dehydrogenase 1-like protein B (hsd11b1l-b).